A 201-amino-acid polypeptide reads, in one-letter code: dITP/XTP pyrophosphatase (201 aa).

9–14 contributes to the substrate binding site; that stretch reads TRNSGK. 2 residues coordinate Mg(2+): Glu42 and Asp71. The Proton acceptor role is filled by Asp71. Residues Ser72, 156 to 159, Lys178, and 183 to 184 contribute to the substrate site; these read FGYD and HR.

This sequence belongs to the HAM1 NTPase family. Homodimer. Mg(2+) is required as a cofactor.

The catalysed reaction is XTP + H2O = XMP + diphosphate + H(+). It carries out the reaction dITP + H2O = dIMP + diphosphate + H(+). The enzyme catalyses ITP + H2O = IMP + diphosphate + H(+). Pyrophosphatase that catalyzes the hydrolysis of nucleoside triphosphates to their monophosphate derivatives, with a high preference for the non-canonical purine nucleotides XTP (xanthosine triphosphate), dITP (deoxyinosine triphosphate) and ITP. Seems to function as a house-cleaning enzyme that removes non-canonical purine nucleotides from the nucleotide pool, thus preventing their incorporation into DNA/RNA and avoiding chromosomal lesions. This Lactococcus lactis subsp. lactis (strain IL1403) (Streptococcus lactis) protein is dITP/XTP pyrophosphatase (ynbD).